We begin with the raw amino-acid sequence, 44 residues long: Conotoxin Sr5.5 (44 aa).

Positions 1–19 (MRCLPVFVILLLLIASAPS) are cleaved as a signal peptide. Residues 20 to 29 (VDDNAKGTQH) constitute a propeptide that is removed on maturation.

Belongs to the conotoxin T superfamily. In terms of processing, contains 2 disulfide bonds that can be either 'C1-C3, C2-C4' or 'C1-C4, C2-C3', since these disulfide connectivities have been observed for conotoxins with cysteine framework V (for examples, see AC P0DQQ7 and AC P81755). In terms of tissue distribution, expressed by the venom duct.

The protein resides in the secreted. The protein is Conotoxin Sr5.5 of Conus spurius (Alphabet cone).